The following is a 417-amino-acid chain: NADH-quinone oxidoreductase subunit D (417 aa).

The protein belongs to the complex I 49 kDa subunit family. NDH-1 is composed of 14 different subunits. Subunits NuoB, C, D, E, F, and G constitute the peripheral sector of the complex.

Its subcellular location is the cell inner membrane. It carries out the reaction a quinone + NADH + 5 H(+)(in) = a quinol + NAD(+) + 4 H(+)(out). NDH-1 shuttles electrons from NADH, via FMN and iron-sulfur (Fe-S) centers, to quinones in the respiratory chain. The immediate electron acceptor for the enzyme in this species is believed to be ubiquinone. Couples the redox reaction to proton translocation (for every two electrons transferred, four hydrogen ions are translocated across the cytoplasmic membrane), and thus conserves the redox energy in a proton gradient. The sequence is that of NADH-quinone oxidoreductase subunit D from Hydrogenovibrio crunogenus (strain DSM 25203 / XCL-2) (Thiomicrospira crunogena).